Reading from the N-terminus, the 268-residue chain is Tryptophan synthase alpha chain (268 aa).

Catalysis depends on proton acceptor residues glutamate 40 and aspartate 51.

Belongs to the TrpA family. In terms of assembly, tetramer of two alpha and two beta chains.

It catalyses the reaction (1S,2R)-1-C-(indol-3-yl)glycerol 3-phosphate + L-serine = D-glyceraldehyde 3-phosphate + L-tryptophan + H2O. Its pathway is amino-acid biosynthesis; L-tryptophan biosynthesis; L-tryptophan from chorismate: step 5/5. Functionally, the alpha subunit is responsible for the aldol cleavage of indoleglycerol phosphate to indole and glyceraldehyde 3-phosphate. This Geobacillus thermodenitrificans (strain NG80-2) protein is Tryptophan synthase alpha chain.